Reading from the N-terminus, the 503-residue chain is Potassium voltage-gated channel subfamily V member 1 (503 aa).

Disordered regions lie at residues 1–20 (MDLS…DSGS) and 171–192 (KKDT…KGPC). Residues 3–213 (LSPRNRPLLD…EKPGSSTAAR (211 aa)) are Cytoplasmic-facing. Positions 10 to 20 (LLDSSSLDSGS) are enriched in low complexity. Positions 171–187 (KKDTDDQESQHESEQDF) are enriched in basic and acidic residues. Residues 214–234 (IFGVISIIFVAVSIVNMALMS) form a helical membrane-spanning segment. Residues 235–241 (AELSWLN) are Extracellular-facing. A helical transmembrane segment spans residues 242-262 (LQLLEILEYVCISWFTGEFVL). The Cytoplasmic segment spans residues 263–279 (RFLCVKDRCHFLRKVPN). The helical transmembrane segment at 280 to 300 (IIDLLAILPFYITLLVESLSG) threads the bilayer. Residues 301–312 (SHTTQELENVGR) are Extracellular-facing. The chain crosses the membrane as a helical; Voltage-sensor span at residues 313-334 (LVQVLRLLRALRMLKLGRHSTG). Residues 335-348 (LRSLGMTITQCYEE) lie on the Cytoplasmic side of the membrane. Residues 349 to 369 (VGLLLLFLSVGISIFSTIEYF) form a helical membrane-spanning segment. The Selectivity filter motif lies at 395-400 (TVGYGD). The chain crosses the membrane as a helical span at residues 410-430 (IVAFMCILSGILVLALPIAII). Residues 431–503 (NDRFSACYFT…RSSGGDDFWF (73 aa)) lie on the Cytoplasmic side of the membrane.

It belongs to the potassium channel family. V (TC 1.A.1.2) subfamily. Kv8.1/KCNV1 sub-subfamily. In terms of assembly, heteromultimer with KCNB1 and KCNB2. Interacts with KCNC4 and KCND1.

It is found in the cell membrane. Potassium channel subunit that does not form functional channels by itself. Modulates KCNB1 and KCNB2 channel activity by shifting the threshold for inactivation to more negative values and by slowing the rate of inactivation. Can down-regulate the channel activity of KCNB1, KCNB2, KCNC4 and KCND1, possibly by trapping them in intracellular membranes. This Mus musculus (Mouse) protein is Potassium voltage-gated channel subfamily V member 1 (Kcnv1).